We begin with the raw amino-acid sequence, 331 residues long: MTIIVTGAAGFIGANIVKGLNERGETDIIAVDNLTRADKFKNIVDCQISDYLDKTDFVERFARGEFGKVRAIFHEGACSDTMETDGRYMMDNNYRYSLAVMRACLDQGVQFLYASSAATYGASETFREEPEFERPLNVYGYSKLLFDQVVRRVMLTALSQIVGFRYFNVYGPREQHKGRMASVAFHNFNQFRSEGTVKLFGEYNGYPQGGQMRDFVSVEDVVKVNLFFFDNPDKSGIFNLGTGRAQPFNDIATTVMNTLRGAEGKPALSTEELAQEGLIEYVKFPDALRGKYQCFTQADQSRLRAAGYTAPFLTVQEGVERYCQWLLKQPV.

Residues 11-12 (FI), 32-33 (DN), Lys39, Lys54, 75-79 (EGACS), and Asn92 contribute to the NADP(+) site. The active-site Proton acceptor is the Tyr139. Lys143 lines the NADP(+) pocket. Asn168 provides a ligand contact to substrate. Residues Val169 and Lys177 each contribute to the NADP(+) site. The active-site Proton acceptor is Lys177. Substrate contacts are provided by residues Arg179, His186, 200–203 (FGEY), Arg213, and Tyr292.

It belongs to the NAD(P)-dependent epimerase/dehydratase family. HldD subfamily. As to quaternary structure, homopentamer. It depends on NADP(+) as a cofactor.

The catalysed reaction is ADP-D-glycero-beta-D-manno-heptose = ADP-L-glycero-beta-D-manno-heptose. It functions in the pathway nucleotide-sugar biosynthesis; ADP-L-glycero-beta-D-manno-heptose biosynthesis; ADP-L-glycero-beta-D-manno-heptose from D-glycero-beta-D-manno-heptose 7-phosphate: step 4/4. Its function is as follows. Catalyzes the interconversion between ADP-D-glycero-beta-D-manno-heptose and ADP-L-glycero-beta-D-manno-heptose via an epimerization at carbon 6 of the heptose. The sequence is that of ADP-L-glycero-D-manno-heptose-6-epimerase from Ralstonia pickettii (strain 12J).